A 474-amino-acid polypeptide reads, in one-letter code: Cysteine--tRNA ligase (474 aa).

Cysteine 30 is a binding site for Zn(2+). The short motif at 32-42 (PTVYNFAHIGN) is the 'HIGH' region element. The Zn(2+) site is built by cysteine 212, histidine 237, and glutamate 241. Residues 270–274 (KMSKS) carry the 'KMSKS' region motif. Lysine 273 contacts ATP.

Belongs to the class-I aminoacyl-tRNA synthetase family. Monomer. The cofactor is Zn(2+).

It is found in the cytoplasm. The catalysed reaction is tRNA(Cys) + L-cysteine + ATP = L-cysteinyl-tRNA(Cys) + AMP + diphosphate. The chain is Cysteine--tRNA ligase from Leptospira borgpetersenii serovar Hardjo-bovis (strain JB197).